The sequence spans 309 residues: Isoflavone reductase homolog IRL (309 aa).

NADP(+) is bound by residues 12–18 (GGTGYLG), Arg-37, and Lys-46. The Proton acceptor role is filled by Lys-134. Residue Arg-138 coordinates NADP(+).

The protein belongs to the NmrA-type oxidoreductase family. Isoflavone reductase subfamily. As to quaternary structure, monomer.

The protein resides in the cytoplasm. Its pathway is alkaloid biosynthesis. Its function is as follows. Reductase that may be involved in a late step of alkaloid biosynthesis. This is Isoflavone reductase homolog IRL from Zea mays (Maize).